The following is a 53-amino-acid chain: ATP synthase protein 8 (53 aa).

A helical membrane pass occupies residues 5 to 25; that stretch reads APISWLTLFFVFSITLVIFNI.

The protein belongs to the ATPase protein 8 family. In terms of assembly, F-type ATPases have 2 components, CF(1) - the catalytic core - and CF(0) - the membrane proton channel.

The protein localises to the mitochondrion membrane. Mitochondrial membrane ATP synthase (F(1)F(O) ATP synthase or Complex V) produces ATP from ADP in the presence of a proton gradient across the membrane which is generated by electron transport complexes of the respiratory chain. F-type ATPases consist of two structural domains, F(1) - containing the extramembraneous catalytic core and F(0) - containing the membrane proton channel, linked together by a central stalk and a peripheral stalk. During catalysis, ATP synthesis in the catalytic domain of F(1) is coupled via a rotary mechanism of the central stalk subunits to proton translocation. Part of the complex F(0) domain. Minor subunit located with subunit a in the membrane. In Aedes aegypti (Yellowfever mosquito), this protein is ATP synthase protein 8.